The following is a 367-amino-acid chain: MAMKVKDIVFMNKGDGENSYVKSAGLTLKVIAKTQPIVQKAVQSLFTGTHSTPLQVVNVADLGCALGPQPLESMSIVIESIVEKCGELGCEMPEIQFHLNDLAGNDFNTLFKGLSVVQEKYKNVSWFAMGAPGSFHGRLFPRNSMHLVHSCYSVHWLSKAPKITSEAGLPLNKGKIYMSKTSPPAVREGYLSQFEEDFSSVLRFRSPELAPDGRMVLILNGRQSADPTEKDICYLWDLLAEALSYLVSEGLIDEEKLDSFNVPYYNPSQEEVERVIDKEGSFTTEFSDTVVLEIGGKNAWSDPGLRIKGYRCFSEPILSHQFGEEVMDKLFDKAEEILAEDYKQGKEATKNISIVVVLKKKTNQTWT.

S-adenosyl-L-homocysteine is bound at residue Tyr20. A theobromine-binding site is contributed by Thr27. Residues Cys64, Gln69, Asp101, Leu102, Ser134, and Phe135 each contribute to the S-adenosyl-L-homocysteine site. Residues Tyr152, His155, and Trp156 each contribute to the theobromine site. Residues Asn172, Asp258, Phe260, and Asn261 each coordinate Mg(2+). Theobromine is bound at residue Phe313.

Belongs to the methyltransferase superfamily. Type-7 methyltransferase family. Mg(2+) is required as a cofactor.

It carries out the reaction 7-methylxanthine + S-adenosyl-L-methionine = theobromine + S-adenosyl-L-homocysteine + H(+). It participates in alkaloid biosynthesis. Functionally, involved in the biosynthesis of theobromine. The polypeptide is Probable 7-methylxanthine methyltransferase 2 (Theobroma cacao (Cacao)).